Consider the following 168-residue polypeptide: Small ribosomal subunit protein uS9 (168 aa).

A compositionally biased stretch (low complexity) spans 1-29 (MAQNEELTAEAVEAEETLTSYTSESTSAE). The segment at 1–36 (MAQNEELTAEAVEAEETLTSYTSESTSAEDAPKKER) is disordered.

Belongs to the universal ribosomal protein uS9 family.

The chain is Small ribosomal subunit protein uS9 from Paenarthrobacter aurescens (strain TC1).